The following is a 462-amino-acid chain: MSKLWGGRFTEEAEAWVEEFGASISFDQQLVNQDINGSIAHVTMLAKQGIVTKEEAEKIKIGLQYLLEEAKQNKLHFSVEAEDIHLNIEKMLIEKIGEVGGKLHTGRSRNDQVATDMHLYLKEKVEHIMKATKQLQTVLVHQAENNIETIMPGYTHLQRAQPISFAHHILAYFWMLERDVNRYEDSLKRINISPLGAGALAGTTFPIDREYSAELLGLNGIYENSLDAVSDRDFILEFLSNSSMLMMHLSRFCEELILWSSQEFQFIEMSDQYATGSSIMPQKKNPDMAELIRGKTGRVYGNLFSLLTVMKGLPLAYNKDLQEDKEGMFDTVKTVEGCLHIMAGMLETMTVNKEKMGQAVTQDFSNATEIADYLANKGLPFRQAHEIVGKLVLHCTQKGIYLVDVPLATYKEMSSLFEEDLYEVLSPYAAVKRRNSAGGTGFEQIEKALEKAKGLTKEAIKN.

It belongs to the lyase 1 family. Argininosuccinate lyase subfamily.

It localises to the cytoplasm. It carries out the reaction 2-(N(omega)-L-arginino)succinate = fumarate + L-arginine. It functions in the pathway amino-acid biosynthesis; L-arginine biosynthesis; L-arginine from L-ornithine and carbamoyl phosphate: step 3/3. This Bacillus cereus (strain AH820) protein is Argininosuccinate lyase.